A 71-amino-acid chain; its full sequence is Protein PSY3 (71 aa).

Positions 1-25 are cleaved as a signal peptide; sequence MGYSSSSRIGLCLFLFFTFALLSSA. Residues 26 to 49 constitute a propeptide that is removed on maturation; it reads RISLSFSENEMTVVPERSLMVSTN. A disordered region spans residues 47–71; the sequence is STNDYSDPTANGRHDPPRGGRGRRR. Tyr-51 bears the Sulfotyrosine mark. Pro-63 is subject to 4-hydroxyproline. Pro-63 carries an O-linked (Ara...) hydroxyproline glycan. A propeptide spanning residues 66–71 is cleaved from the precursor; sequence GRGRRR.

Belongs to the sulfated-peptide plant hormone family. Post-translationally, the sulfation and the glycosylation are required for full activity.

The protein localises to the secreted. Its function is as follows. Promotes cellular proliferation and expansion. The protein is Protein PSY3 (PSY3) of Arabidopsis thaliana (Mouse-ear cress).